The sequence spans 270 residues: L-fucose dehydrogenase (270 aa).

12 residues coordinate NAD(+): R19, I21, D40, K41, D62, V63, N89, Y154, K158, I187, T189, and L191. Y154 functions as the Proton acceptor in the catalytic mechanism.

Belongs to the short-chain dehydrogenases/reductases (SDR) family. Homotetramer. Highly expressed in brain, placenta, liver and kidney.

The protein resides in the cytoplasm. It catalyses the reaction L-fucose + NAD(+) = L-fucono-1,5-lactone + NADH + H(+). The catalysed reaction is D-arabinose + NAD(+) = D-arabinono-1,5-lactone + NADH + H(+). The enzyme catalyses L-galactose + NAD(+) = L-galactono-1,5-lactone + NADH + H(+). It functions in the pathway carbohydrate degradation; L-fucose degradation. Its function is as follows. Catalyzes the NAD(+)-dependent oxidation of L-fucose, yielding L-fucono-1,5-lactone, which rapidly converts spontaneously to L-fucone-1,4-lactone. Can also act on D-arabinose and L-galactose, with lower catalytic efficiency. Does not use NADPH. May be the initial enzyme of the L-fucose degradation pathway in mammals. This chain is L-fucose dehydrogenase, found in Homo sapiens (Human).